The following is a 292-amino-acid chain: ATP synthase subunit a (292 aa).

Helical transmembrane passes span 37 to 57 (IDSV…FWLC), 96 to 116 (FIAP…AMDM), 144 to 164 (VVPT…LVLC), 192 to 212 (PVFA…EYVA), 230 to 250 (LVFM…SGVL), and 263 to 283 (AIFH…LALI).

This sequence belongs to the ATPase A chain family. As to quaternary structure, F-type ATPases have 2 components, CF(1) - the catalytic core - and CF(0) - the membrane proton channel. CF(1) has five subunits: alpha(3), beta(3), gamma(1), delta(1), epsilon(1). CF(0) has three main subunits: a(1), b(2) and c(9-12). The alpha and beta chains form an alternating ring which encloses part of the gamma chain. CF(1) is attached to CF(0) by a central stalk formed by the gamma and epsilon chains, while a peripheral stalk is formed by the delta and b chains.

It is found in the cell inner membrane. In terms of biological role, key component of the proton channel; it plays a direct role in the translocation of protons across the membrane. This is ATP synthase subunit a from Paracidovorax citrulli (strain AAC00-1) (Acidovorax citrulli).